We begin with the raw amino-acid sequence, 368 residues long: MTDNSQIKVIVGMSGGVDSSVSAYLLQQQGYQVEGLFMKNWEEDDTDEYCSAAQDLADAKAVCDKLGMKLHTINFAAEYWDNVFEHFLEEYKAGRTPNPDILCNKEIKFKAFLEFAAEELGATYIATGHYVRRDDSTGRPRLLRGLDTNKDQSYFLYTLSEAQVGQSLFPVGDLEKPEVRRIAEQLDLITAKKKDSTGICFIGERKFKDFLAKFLPAQPGPIETVDGKVIGEHQGLMYHTLGQRKGLGIGGRKDATEEAWYVVDKEVERNTLVVAQGEHPRLYSDGLIASQLHWVDRTPIRAPRRCTVKTRYRQEDIPCLIQPIDDETIRVIFDEKQAAVTPGQSAVFYDGEVCLGGGIIEQRFSHPV.

ATP contacts are provided by residues 12 to 19 and methionine 38; that span reads GMSGGVDS. The interaction with target base in tRNA stretch occupies residues 98–100; it reads NPD. Catalysis depends on cysteine 103, which acts as the Nucleophile. Cysteine 103 and cysteine 200 are oxidised to a cystine. Residue glycine 128 participates in ATP binding. Residues 150–152 are interaction with tRNA; sequence KDQ. Cysteine 200 functions as the Cysteine persulfide intermediate in the catalytic mechanism. Residues 311–312 are interaction with tRNA; the sequence is RY.

This sequence belongs to the MnmA/TRMU family.

Its subcellular location is the cytoplasm. It catalyses the reaction S-sulfanyl-L-cysteinyl-[protein] + uridine(34) in tRNA + AH2 + ATP = 2-thiouridine(34) in tRNA + L-cysteinyl-[protein] + A + AMP + diphosphate + H(+). Its function is as follows. Catalyzes the 2-thiolation of uridine at the wobble position (U34) of tRNA, leading to the formation of s(2)U34. This chain is tRNA-specific 2-thiouridylase MnmA, found in Aeromonas hydrophila subsp. hydrophila (strain ATCC 7966 / DSM 30187 / BCRC 13018 / CCUG 14551 / JCM 1027 / KCTC 2358 / NCIMB 9240 / NCTC 8049).